Reading from the N-terminus, the 391-residue chain is MTTINLGVPEVPAKSPLAPRRKSRQINVGGVLVGGGAPISVQSMTTTLTADVNATLQQIAELTAAGCDIVRVACPSQDDADALPIIAKKSPIPVIADIHFQPKYVFAAIEAGCAGVRVNPGNIKKFDDKVKEIAQAAKDHGTPIRIGVNAGSLDPRILQKYGKPTAEALVESALWEASLFEEHDFHDIKISVKHHDPMVMVQAYRLLAAQTDYPLHLGVTEAGPLLQGTIKSAVAFGILLSEGIGDTIRVSLSAPPVEEVKVGIGILESLGLRPRKLDIVSCPSCGRAQVDVYKLAEEVQAGLQGFPFPLRVAVMGCVVNGPGEAREADLGVASGNGKGQIFVRGEVIKTVPESQIVETLLEEAMRLAEEMQASGAFGDDQAVGAPIVTVQ.

[4Fe-4S] cluster is bound by residues Cys-282, Cys-285, Cys-317, and Glu-324.

This sequence belongs to the IspG family. Requires [4Fe-4S] cluster as cofactor.

The catalysed reaction is (2E)-4-hydroxy-3-methylbut-2-enyl diphosphate + oxidized [flavodoxin] + H2O + 2 H(+) = 2-C-methyl-D-erythritol 2,4-cyclic diphosphate + reduced [flavodoxin]. It participates in isoprenoid biosynthesis; isopentenyl diphosphate biosynthesis via DXP pathway; isopentenyl diphosphate from 1-deoxy-D-xylulose 5-phosphate: step 5/6. Converts 2C-methyl-D-erythritol 2,4-cyclodiphosphate (ME-2,4cPP) into 1-hydroxy-2-methyl-2-(E)-butenyl 4-diphosphate. The sequence is that of 4-hydroxy-3-methylbut-2-en-1-yl diphosphate synthase (flavodoxin) from Acidothermus cellulolyticus (strain ATCC 43068 / DSM 8971 / 11B).